The primary structure comprises 576 residues: Arginine--tRNA ligase (576 aa).

The 'HIGH' region signature appears at 132–142 (ANPTGPMHIGH).

Belongs to the class-I aminoacyl-tRNA synthetase family. Monomer.

It is found in the cytoplasm. The catalysed reaction is tRNA(Arg) + L-arginine + ATP = L-arginyl-tRNA(Arg) + AMP + diphosphate. The sequence is that of Arginine--tRNA ligase from Ehrlichia ruminantium (strain Welgevonden).